We begin with the raw amino-acid sequence, 152 residues long: MQLTELIETTVTGLGYELVDLERTGRGMLCIYIDQPAGISLDDCEKVTRQLQHVLTVENIDYERLEVSSPGLDRPLKKLADFERFAGSEVSVTLKKPLDGRKTYRGILHAPNGETIGLEFERNKGEAAMLDFTLADIDKARLIPQVDFRSRK.

The protein belongs to the RimP family.

The protein resides in the cytoplasm. Required for maturation of 30S ribosomal subunits. This is Ribosome maturation factor RimP from Burkholderia vietnamiensis (strain G4 / LMG 22486) (Burkholderia cepacia (strain R1808)).